Consider the following 167-residue polypeptide: Translationally-controlled tumor protein homolog (167 aa).

A TCTP domain is found at 1 to 167 (MLIFEDVISG…WKHGVKENKI (167 aa)).

This sequence belongs to the TCTP family.

It is found in the cytoplasm. The protein localises to the cytoskeleton. Involved in protein synthesis. Involved in microtubule stabilization. This chain is Translationally-controlled tumor protein homolog (TMA19), found in Candida albicans (strain SC5314 / ATCC MYA-2876) (Yeast).